Here is a 532-residue protein sequence, read N- to C-terminus: Variant surface glycoprotein ILTAT 1.23 (532 aa).

The N-terminal stretch at 1 to 23 (MFKNINAAVLLLILSTRNDYANA) is a signal peptide. Asn66 is a glycosylation site (N-linked (GlcNAc...) asparagine). Disordered regions lie at residues 79–107 (APKK…RNHA) and 408–504 (MQAG…DQDK). Asn419 carries N-linked (GlcNAc...) asparagine glycosylation. Positions 427–445 (CKWEEKDGKDGKCVADDSK) are enriched in basic and acidic residues. Residues 450–470 (GNAPAGAGDGTAGTTTTPNCA) show a composition bias toward low complexity. 2 stretches are compositionally biased toward basic and acidic residues: residues 472–484 (HTDK…ENKG) and 494–504 (KGKEGESDQDK). Asn509 carries N-linked (GlcNAc...) asparagine glycosylation. A lipid anchor (GPI-anchor amidated asparagine) is attached at Asn509. A propeptide spans 510–532 (GSFLAKKKFALSVVSAAFTALLF) (removed in mature form).

It is found in the cell membrane. Its function is as follows. VSG forms a coat on the surface of the parasite. The trypanosome evades the immune response of the host by expressing a series of antigenically distinct VSGs from an estimated 1000 VSG genes. This is Variant surface glycoprotein ILTAT 1.23 from Trypanosoma brucei brucei.